The primary structure comprises 183 residues: Ran guanine nucleotide release factor (183 aa).

An interaction with RAN region spans residues 23-66 (ELRQIPDNQEVFAHSQTDQSIIIELLEYQSQVQDADAARYHFED).

Belongs to the MOG1 family. As to quaternary structure, monomer. Interacts with ran.

The protein localises to the nucleus. The protein resides in the cytoplasm. It is found in the perinuclear region. It localises to the cell membrane. In terms of biological role, may regulate the intracellular trafficking of RAN. Promotes guanine nucleotide release from RAN and inhibits binding of new GTP. Plays a role in the regulation of the levels of GTP-bound RAN in the nucleus. Required for normal expression of the ion channel hcn4 and for normal expression of the cardiac transcription factors nkx2.5, gata4 and hand2 during embryonic development. Required for normal embryonic heart development and normal heart rate. This chain is Ran guanine nucleotide release factor, found in Danio rerio (Zebrafish).